The chain runs to 448 residues: Protease Do-like 8, chloroplastic (448 aa).

A serine protease region spans residues 152-333 (EGNGSGVVWD…IPSSTVLKIV (182 aa)). Active-site charge relay system residues include histidine 171, aspartate 214, and serine 292. Residues 336–433 (LIQFSKVLRA…DKVTLKIKRG (98 aa)) enclose the PDZ domain.

Belongs to the peptidase S1C family.

The protein resides in the plastid. Its subcellular location is the chloroplast thylakoid lumen. Its function is as follows. Probable serine protease. This Arabidopsis thaliana (Mouse-ear cress) protein is Protease Do-like 8, chloroplastic (DEGP8).